Here is a 148-residue protein sequence, read N- to C-terminus: ATP synthase epsilon chain (148 aa).

It belongs to the ATPase epsilon chain family. As to quaternary structure, F-type ATPases have 2 components, CF(1) - the catalytic core - and CF(0) - the membrane proton channel. CF(1) has five subunits: alpha(3), beta(3), gamma(1), delta(1), epsilon(1). CF(0) has three main subunits: a, b and c.

Its subcellular location is the cell inner membrane. Its function is as follows. Produces ATP from ADP in the presence of a proton gradient across the membrane. The polypeptide is ATP synthase epsilon chain (Paracoccus denitrificans (strain Pd 1222)).